The primary structure comprises 559 residues: Glutamine--tRNA ligase (559 aa).

The short motif at 36 to 46 (PEPNGYLHLGH) is the 'HIGH' region element. ATP is bound by residues 37-39 (EPN) and 43-49 (HLGHAKS). L-glutamine contacts are provided by Asp-69 and Tyr-214. ATP-binding positions include Thr-233, 263 to 264 (RL), and 271 to 273 (LSK). The 'KMSKS' region motif lies at 270–274 (LLSKR).

It belongs to the class-I aminoacyl-tRNA synthetase family. In terms of assembly, monomer.

The protein resides in the cytoplasm. It carries out the reaction tRNA(Gln) + L-glutamine + ATP = L-glutaminyl-tRNA(Gln) + AMP + diphosphate. This Nitrobacter winogradskyi (strain ATCC 25391 / DSM 10237 / CIP 104748 / NCIMB 11846 / Nb-255) protein is Glutamine--tRNA ligase.